Here is a 626-residue protein sequence, read N- to C-terminus: Probable serine/threonine-protein kinase CCRP1 (626 aa).

Positions Y36–L291 constitute a Protein kinase domain. ATP contacts are provided by residues L42–C50 and K65. A Phosphoserine modification is found at S71. D159 serves as the catalytic Proton acceptor. The segment at N399 to S433 is disordered. Over residues F400–Q427 the composition is skewed to polar residues. POLO box domains lie at W471 to G554 and Y574 to P626.

This sequence belongs to the protein kinase superfamily. Ser/Thr protein kinase family. CDC5/Polo subfamily. Embryo.

It catalyses the reaction L-seryl-[protein] + ATP = O-phospho-L-seryl-[protein] + ADP + H(+). The catalysed reaction is L-threonyl-[protein] + ATP = O-phospho-L-threonyl-[protein] + ADP + H(+). In terms of biological role, may play a role in the division of some cell types. The protein is Probable serine/threonine-protein kinase CCRP1 (CCRP1) of Zea mays (Maize).